The primary structure comprises 256 residues: Endonuclease NucS (256 aa).

A disordered region spans residues 62 to 97 (AAKSAQHSRESVAGGAVDGDSATHSPESVAAGEPEK).

The protein belongs to the NucS endonuclease family.

It is found in the cytoplasm. Cleaves both 3' and 5' ssDNA extremities of branched DNA structures. This chain is Endonuclease NucS, found in Bifidobacterium longum (strain NCC 2705).